The primary structure comprises 238 residues: TATA-box-binding protein (238 aa).

Positions 1-58 (MDLKLPPTNPTNPQQAKTFMKSIEEDEKNKAEDLDIIKKEDIDEPKQEDTTDGNGGGG) are disordered. Residues 27–49 (EKNKAEDLDIIKKEDIDEPKQED) are compositionally biased toward basic and acidic residues. Repeat copies occupy residues 65-141 (LQNI…ARII) and 155-232 (IQNI…YPVL).

Belongs to the TBP family. In terms of assembly, belongs to the TFIID complex together with the TBP-associated factors (TAFs). Binds DNA as monomer.

It localises to the nucleus. Functionally, general transcription factor that functions at the core of the DNA-binding multiprotein factor TFIID. Binding of TFIID to the TATA box is the initial transcriptional step of the pre-initiation complex (PIC), playing a role in the activation of eukaryotic genes transcribed by RNA polymerase II. The protein is TATA-box-binding protein (TBP1) of Candida albicans (strain SC5314 / ATCC MYA-2876) (Yeast).